The chain runs to 371 residues: L-lysine 4-hydroxylase (371 aa).

Residues His-174, Glu-176, and His-310 each contribute to the Fe cation site.

The protein belongs to the clavaminate synthase family. The cofactor is Fe(2+).

It carries out the reaction L-lysine + 2-oxoglutarate + O2 = (4R)-4-hydroxy-L-lysine + succinate + CO2. Its function is as follows. Alpha-ketoglutarate-dependent dioxygenase that in vitro catalyzes the regio- and stereoselective hydroxylation of L-lysine, leading to (4R)-4-hydroxy-L-lysine. This chain is L-lysine 4-hydroxylase, found in Niastella koreensis (strain DSM 17620 / KACC 11465 / NBRC 106392 / GR20-10).